The following is a 66-amino-acid chain: Large ribosomal subunit protein bL32 (66 aa).

Over residues 1–18 the composition is skewed to basic residues; sequence MAIVPKRKTSKQRKHKRR. Positions 1–21 are disordered; it reads MAIVPKRKTSKQRKHKRRTND.

It belongs to the bacterial ribosomal protein bL32 family.

In Mycoplasmopsis agalactiae (strain NCTC 10123 / CIP 59.7 / PG2) (Mycoplasma agalactiae), this protein is Large ribosomal subunit protein bL32.